Reading from the N-terminus, the 598-residue chain is N-acetylmuramoyl-L-alanine amidase (598 aa).

Positions 1-31 (MSPGNWKTTMVVRGILLILYGLLLQPEPGTA) are cleaved as a signal peptide. Disordered stretches follow at residues 172–194 (SSAHKDTSADVNSADVGTLSPNV) and 212–233 (STGVQVTSPDVQVSSPDTKAKS). Ser-261 carries the phosphoserine modification. A glycan (N-linked (GlcNAc...) asparagine) is linked at Asn-353. The region spanning 428–554 (FLYIHHTYVP…RQLVRTDCPG (127 aa)) is the N-acetylmuramoyl-L-alanine amidase domain. Residue His-432 participates in Zn(2+) binding. A disulfide bridge links Cys-441 with Cys-447. Asn-507 carries N-linked (GlcNAc...) asparagine glycosylation. The Zn(2+) site is built by His-544 and Cys-552.

It belongs to the N-acetylmuramoyl-L-alanine amidase 2 family. Zn(2+) is required as a cofactor.

The protein localises to the secreted. Its subcellular location is the membrane. It carries out the reaction Hydrolyzes the link between N-acetylmuramoyl residues and L-amino acid residues in certain cell-wall glycopeptides.. May play a scavenger role by digesting biologically active peptidoglycan (PGN) into biologically inactive fragments. Has no direct bacteriolytic activity. This is N-acetylmuramoyl-L-alanine amidase (PGLYRP2) from Sus scrofa (Pig).